Reading from the N-terminus, the 120-residue chain is Glycine cleavage system H protein (120 aa).

The region spanning 19 to 101 (DGTVGITDHA…YEGGWLFKLE (83 aa)) is the Lipoyl-binding domain. Lysine 60 is modified (N6-lipoyllysine).

It belongs to the GcvH family. In terms of assembly, the glycine cleavage system is composed of four proteins: P, T, L and H. The cofactor is (R)-lipoate.

Functionally, the glycine cleavage system catalyzes the degradation of glycine. The H protein shuttles the methylamine group of glycine from the P protein to the T protein. This chain is Glycine cleavage system H protein, found in Deinococcus deserti (strain DSM 17065 / CIP 109153 / LMG 22923 / VCD115).